The chain runs to 394 residues: Queuine tRNA-ribosyltransferase accessory subunit 2 (394 aa).

The Zn(2+) site is built by cysteine 336, cysteine 338, cysteine 341, and histidine 367.

Belongs to the queuine tRNA-ribosyltransferase family. QTRT2 subfamily. Heterodimer of a catalytic subunit and an accessory subunit. It depends on Zn(2+) as a cofactor.

Its subcellular location is the cytoplasm. In terms of biological role, non-catalytic subunit of the queuine tRNA-ribosyltransferase (TGT) that catalyzes the base-exchange of a guanine (G) residue with queuine (Q) at position 34 (anticodon wobble position) in tRNAs with GU(N) anticodons (tRNA-Asp, -Asn, -His and -Tyr), resulting in the hypermodified nucleoside queuosine (7-(((4,5-cis-dihydroxy-2-cyclopenten-1-yl)amino)methyl)-7-deazaguanosine). In Ixodes scapularis (Black-legged tick), this protein is Queuine tRNA-ribosyltransferase accessory subunit 2.